Reading from the N-terminus, the 427-residue chain is uncharacterized protein (427 aa).

A run of 3 helical transmembrane segments spans residues 10 to 30, 43 to 63, and 71 to 91; these read LAYLVFESVLQVVIIALAGFW, KIISLLNVDLFTPCLIFSKLA, and IFEIAIIPIFFGLTTGISFIS. Phosphothreonine is present on T199. At S234 the chain carries Phosphoserine. The next 5 helical transmembrane spans lie at 253-273, 288-308, 327-347, 358-378, and 397-417; these read NLNPPLYSMIFAVVVAAIGPL, FAEAVTQLGSVSIPLILVVLG, LLIGSIIGRMILPSCFLLPII, ILDDPIFLVVGFLLTVSPPAI, and ILFWGYAVLSLPVSIIVVSGA.

This sequence belongs to the auxin efflux carrier (TC 2.A.69) family.

Its subcellular location is the membrane. This is an uncharacterized protein from Saccharomyces cerevisiae (strain ATCC 204508 / S288c) (Baker's yeast).